Consider the following 512-residue polypeptide: Maturase K (512 aa).

Belongs to the intron maturase 2 family. MatK subfamily.

It is found in the plastid. Its subcellular location is the chloroplast. In terms of biological role, usually encoded in the trnK tRNA gene intron. Probably assists in splicing its own and other chloroplast group II introns. In Lemna minuta (Least duckweed), this protein is Maturase K.